A 337-amino-acid chain; its full sequence is Lipoate-protein ligase A (337 aa).

The region spanning 29–216 (DQNQTILFLW…AFFNYYQTTV (188 aa)) is the BPL/LPL catalytic domain. ATP contacts are provided by residues arginine 71, 76-79 (GAVF), and lysine 134. Residue lysine 134 coordinates (R)-lipoate.

This sequence belongs to the LplA family. In terms of assembly, monomer.

It is found in the cytoplasm. The enzyme catalyses L-lysyl-[lipoyl-carrier protein] + (R)-lipoate + ATP = N(6)-[(R)-lipoyl]-L-lysyl-[lipoyl-carrier protein] + AMP + diphosphate + H(+). It functions in the pathway protein modification; protein lipoylation via exogenous pathway; protein N(6)-(lipoyl)lysine from lipoate: step 1/2. Its pathway is protein modification; protein lipoylation via exogenous pathway; protein N(6)-(lipoyl)lysine from lipoate: step 2/2. Functionally, catalyzes both the ATP-dependent activation of exogenously supplied lipoate to lipoyl-AMP and the transfer of the activated lipoyl onto the lipoyl domains of lipoate-dependent enzymes. The sequence is that of Lipoate-protein ligase A from Blochmanniella floridana.